A 612-amino-acid chain; its full sequence is Protein NorD (612 aa).

The tract at residues 220–246 (EGEGDLETPPSGQSRQRNGARRVDDSS) is disordered. The 190-residue stretch at 420 to 609 (DLACLLLADL…FPPAAAVQAT (190 aa)) folds into the VWFA domain.

Its function is as follows. Component of the anaerobic respiratory chain that transforms nitrate to dinitrogen (denitrification). This chain is Protein NorD (norD), found in Stutzerimonas stutzeri (Pseudomonas stutzeri).